Consider the following 693-residue polypeptide: Elongation factor G 1 (693 aa).

Residues 4–281 form the tr-type G domain; that stretch reads NKLRNIGISA…AVTRFLPSPH (278 aa). GTP-binding positions include 13-20, 80-84, and 134-137; these read AHIDSGKT, DTPGH, and NKCD.

It belongs to the TRAFAC class translation factor GTPase superfamily. Classic translation factor GTPase family. EF-G/EF-2 subfamily.

It is found in the cytoplasm. In terms of biological role, catalyzes the GTP-dependent ribosomal translocation step during translation elongation. During this step, the ribosome changes from the pre-translocational (PRE) to the post-translocational (POST) state as the newly formed A-site-bound peptidyl-tRNA and P-site-bound deacylated tRNA move to the P and E sites, respectively. Catalyzes the coordinated movement of the two tRNA molecules, the mRNA and conformational changes in the ribosome. This chain is Elongation factor G 1, found in Borreliella afzelii (strain PKo) (Borrelia afzelii).